Here is a 150-residue protein sequence, read N- to C-terminus: Large ribosomal subunit protein bL9 (150 aa).

The protein belongs to the bacterial ribosomal protein bL9 family.

Its function is as follows. Binds to the 23S rRNA. This Variovorax paradoxus (strain S110) protein is Large ribosomal subunit protein bL9.